A 308-amino-acid chain; its full sequence is tRNA dimethylallyltransferase (308 aa).

Residue 14–21 (GPTASGKT) participates in ATP binding. Residue 16 to 21 (TASGKT) participates in substrate binding. 3 interaction with substrate tRNA regions span residues 39–42 (DSAL), 163–167 (QRLAR), and 244–249 (RCVGYR).

Belongs to the IPP transferase family. In terms of assembly, monomer. Requires Mg(2+) as cofactor.

It catalyses the reaction adenosine(37) in tRNA + dimethylallyl diphosphate = N(6)-dimethylallyladenosine(37) in tRNA + diphosphate. Catalyzes the transfer of a dimethylallyl group onto the adenine at position 37 in tRNAs that read codons beginning with uridine, leading to the formation of N6-(dimethylallyl)adenosine (i(6)A). This Shewanella halifaxensis (strain HAW-EB4) protein is tRNA dimethylallyltransferase.